A 461-amino-acid chain; its full sequence is Kynurenine 3-monooxygenase (461 aa).

A run of 2 helical transmembrane segments spans residues 395–415 and 432–452; these read GFMN…VTFT and ILSN…AIGI.

This sequence belongs to the aromatic-ring hydroxylase family. KMO subfamily. The cofactor is FAD.

It is found in the mitochondrion. It localises to the membrane. The catalysed reaction is L-kynurenine + NADPH + O2 + H(+) = 3-hydroxy-L-kynurenine + NADP(+) + H2O. It participates in cofactor biosynthesis; NAD(+) biosynthesis; quinolinate from L-kynurenine: step 1/3. Functionally, catalyzes the hydroxylation of L-kynurenine (L-Kyn) to form 3-hydroxy-L-kynurenine (L-3OHKyn). Required for synthesis of quinolinic acid. This Caenorhabditis briggsae protein is Kynurenine 3-monooxygenase.